We begin with the raw amino-acid sequence, 120 residues long: Large ribosomal subunit protein uL18 (120 aa).

This sequence belongs to the universal ribosomal protein uL18 family. In terms of assembly, part of the 50S ribosomal subunit; part of the 5S rRNA/L5/L18/L25 subcomplex. Contacts the 5S and 23S rRNAs.

Its function is as follows. This is one of the proteins that bind and probably mediate the attachment of the 5S RNA into the large ribosomal subunit, where it forms part of the central protuberance. The protein is Large ribosomal subunit protein uL18 of Rhodospirillum centenum (strain ATCC 51521 / SW).